A 92-amino-acid polypeptide reads, in one-letter code: Small ribosomal subunit protein bS18c (92 aa).

This sequence belongs to the bacterial ribosomal protein bS18 family. In terms of assembly, part of the 30S ribosomal subunit.

The protein resides in the plastid. The protein is Small ribosomal subunit protein bS18c (rps18) of Epifagus virginiana (Beechdrops).